A 524-amino-acid chain; its full sequence is Glucose-6-phosphate 1-dehydrogenase (524 aa).

Residue Ser20 is modified to Phosphoserine. Residues 42–49, Arg76, and Lys175 each bind NADP(+); that span reads GASGDLAK. Residues Lys175, 205-209, Glu243, and Asp262 each bind D-glucose 6-phosphate; that span reads HYLGK. His267 serves as the catalytic Proton acceptor. An NADP(+)-binding site is contributed by Arg362. D-glucose 6-phosphate contacts are provided by Lys365 and Arg370. Residues Lys371, Arg375, and Arg398 each contribute to the NADP(+) site. Residue Gln400 coordinates D-glucose 6-phosphate. NADP(+) contacts are provided by residues 406–408, 426–428, Arg492, Tyr508, and Trp514; these read YFK and DLT.

Belongs to the glucose-6-phosphate dehydrogenase family.

Its subcellular location is the cytoplasm. It localises to the cytosol. The catalysed reaction is D-glucose 6-phosphate + NADP(+) = 6-phospho-D-glucono-1,5-lactone + NADPH + H(+). The protein operates within carbohydrate degradation; pentose phosphate pathway; D-ribulose 5-phosphate from D-glucose 6-phosphate (oxidative stage): step 1/3. Cytosolic glucose-6-phosphate dehydrogenase that catalyzes the first and rate-limiting step of the oxidative branch within the pentose phosphate pathway/shunt, an alternative route to glycolysis for the dissimilation of carbohydrates and a major source of reducing power and metabolic intermediates for fatty acid and nucleic acid biosynthetic processes. In Drosophila melanogaster (Fruit fly), this protein is Glucose-6-phosphate 1-dehydrogenase.